Consider the following 211-residue polypeptide: MRNELTAMPHAAPPPLLGVLLAGGRSSRMGTPKALLPHPSGGTFLTHSLDRLRLVCEEKIVVSLASEAHRAQVQLPPSVPALFDSQPALGPAMGVSVALQHASSNGFAGCLFTPVDLPDLSVDDLLSLVHAWRESPTQIVLAQQTDPERLQPLVGIYPVACMDSIQRVVESEHRSLYRSLRSSDHQTVAIPSTRLRNVNTPADLGPPFDST.

GTP-binding positions include 21–23 (LAG), K33, D84, and D116. D116 serves as a coordination point for Mg(2+).

The protein belongs to the MobA family. Requires Mg(2+) as cofactor.

Its subcellular location is the cytoplasm. It catalyses the reaction Mo-molybdopterin + GTP + H(+) = Mo-molybdopterin guanine dinucleotide + diphosphate. Its function is as follows. Transfers a GMP moiety from GTP to Mo-molybdopterin (Mo-MPT) cofactor (Moco or molybdenum cofactor) to form Mo-molybdopterin guanine dinucleotide (Mo-MGD) cofactor. In Rhodopirellula baltica (strain DSM 10527 / NCIMB 13988 / SH1), this protein is Probable molybdenum cofactor guanylyltransferase.